The chain runs to 686 residues: Translation initiation factor IF-2 (686 aa).

Residues 54–105 (KPSVADEFEVEEKVVRSKKNSNKKKKKGKGNEDKRQENFAGRQQTQTVETPD) form a disordered region. Positions 69–81 (RSKKNSNKKKKKG) are enriched in basic residues. Residues 188-357 (ERPAVVTIMG…LLVSEVEEYK (170 aa)) form the tr-type G domain. The segment at 197–204 (GHVDHGKT) is G1. Residue 197 to 204 (GHVDHGKT) coordinates GTP. Residues 222–226 (GITQH) form a G2 region. The tract at residues 243 to 246 (DTPG) is G3. Residues 243–247 (DTPGH) and 297–300 (NKMD) contribute to the GTP site. Residues 297 to 300 (NKMD) form a G4 region. Positions 333–335 (SAI) are G5.

Belongs to the TRAFAC class translation factor GTPase superfamily. Classic translation factor GTPase family. IF-2 subfamily.

It localises to the cytoplasm. Its function is as follows. One of the essential components for the initiation of protein synthesis. Protects formylmethionyl-tRNA from spontaneous hydrolysis and promotes its binding to the 30S ribosomal subunits. Also involved in the hydrolysis of GTP during the formation of the 70S ribosomal complex. The sequence is that of Translation initiation factor IF-2 from Bacillus cereus (strain AH187).